Here is a 719-residue protein sequence, read N- to C-terminus: DNA ligase (719 aa).

Residues 42-46 (DAAYD), 92-93 (SL), and E126 each bind NAD(+). K128 functions as the N6-AMP-lysine intermediate in the catalytic mechanism. R149, E185, K301, and K325 together coordinate NAD(+). The Zn(2+) site is built by C430, C433, C448, and C454. The region spanning 640–719 (ATGSPVEGKT…DDWFKLVGED (80 aa)) is the BRCT domain.

The protein belongs to the NAD-dependent DNA ligase family. LigA subfamily. It depends on Mg(2+) as a cofactor. Requires Mn(2+) as cofactor.

It catalyses the reaction NAD(+) + (deoxyribonucleotide)n-3'-hydroxyl + 5'-phospho-(deoxyribonucleotide)m = (deoxyribonucleotide)n+m + AMP + beta-nicotinamide D-nucleotide.. Its function is as follows. DNA ligase that catalyzes the formation of phosphodiester linkages between 5'-phosphoryl and 3'-hydroxyl groups in double-stranded DNA using NAD as a coenzyme and as the energy source for the reaction. It is essential for DNA replication and repair of damaged DNA. The polypeptide is DNA ligase (Brucella ovis (strain ATCC 25840 / 63/290 / NCTC 10512)).